The sequence spans 711 residues: Phosphate acetyltransferase (711 aa).

The interval 390–711 (AFRFQLTELA…IALTAIQATQ (322 aa)) is phosphate acetyltransferase.

In the N-terminal section; belongs to the CobB/CobQ family. This sequence in the C-terminal section; belongs to the phosphate acetyltransferase and butyryltransferase family. As to quaternary structure, homohexamer.

The protein localises to the cytoplasm. The catalysed reaction is acetyl-CoA + phosphate = acetyl phosphate + CoA. It participates in metabolic intermediate biosynthesis; acetyl-CoA biosynthesis; acetyl-CoA from acetate: step 2/2. Involved in acetate metabolism. This chain is Phosphate acetyltransferase (pta), found in Haemophilus influenzae (strain ATCC 51907 / DSM 11121 / KW20 / Rd).